We begin with the raw amino-acid sequence, 618 residues long: Ubiquitin carboxyl-terminal hydrolase 2 (618 aa).

Residues 1-213 are necessary for interaction with MDM4; the sequence is MSQLSSTLKR…RSEYLTDYLE (213 aa). 2 disordered regions span residues 54 to 112 and 246 to 274; these read VSPT…GGSG and RYTL…MNSK. Over residues 90–100 the composition is skewed to basic and acidic residues; the sequence is KRSESQTRGNE. The span at 255–274 shows a compositional bias: polar residues; sequence GQASGPSRSTSPGRDTMNSK. In terms of domain architecture, USP spans 280–612; it reads AGLRNLGNTC…DAYLLFYELA (333 aa). The Nucleophile role is filled by C289. The segment at 416–516 is necessary for interaction with MDM4; it reads YLEREDSRIG…FPKILVLHLK (101 aa). Zn(2+) is bound by residues C438, C441, C489, and C492. H570 serves as the catalytic Proton acceptor.

Belongs to the peptidase C19 family. USP2 subfamily. In terms of assembly, homooligomer. Found in trimeric complex with MDM2 and MDM4 and USP2. Interacts with CCND1; the interaction is direct and promotes its stabilization by antagonizing ubiquitin-dependent degradation. Interacts (via N-terminus and C-terminus) with MDM2. Interacts with MDM4. Interacts with PER1. Interacts with KCNQ1; counteracts the NEDD4L-specific down-regulation of I(Ks) and restores plasma membrane localization of KCNQ1. Isoform 4: Interacts with NHERF4 and CLTC. Expressed in mesangial cells of the kidney. Isoform 1 and isoform 2 are expressed in elongated spermatids; the shorter form appearing earlier than the longer form (at protein level). Isoform 1 and isoform 2 are expressed in early round spermatids of the testis. Isoform 1 is expressed in muscle and heart. Isoform 2 is expressed in muscle, lung, heart, brain, liver and ovary. During muscle differentiation, isoform 1 expression increases before the onset of membrane fusion and decreases as the myogenic processes proceeded; un counterpart, isoform 2 expression remains low until the burst of membrane fusion but increases thereafter.

It localises to the cytoplasm. It is found in the perinuclear region. The protein resides in the nucleus. The protein localises to the membrane. The catalysed reaction is Thiol-dependent hydrolysis of ester, thioester, amide, peptide and isopeptide bonds formed by the C-terminal Gly of ubiquitin (a 76-residue protein attached to proteins as an intracellular targeting signal).. Its activity is regulated as follows. Cleavage is inhibited by ubiquitin in a dosage-dependent manner. Cleavage is blocked by ubiquitin aldehyde. Its function is as follows. Hydrolase that deubiquitinates polyubiquitinated target proteins such as MDM2, MDM4 and CCND1. Isoform 1 and isoform 2 possess both ubiquitin-specific peptidase and isopeptidase activities. Deubiquitinates MDM2 without reversing MDM2-mediated p53/TP53 ubiquitination and thus indirectly promotes p53/TP53 degradation and limits p53 activity. Has no deubiquitinase activity against p53/TP53. Prevents MDM2-mediated degradation of MDM4. Plays a role in the G1/S cell-cycle progression in normal and cancer cells. Regulates the circadian clock by modulating its intrinsic circadian rhythm and its capacity to respond to external cues. Associates with clock proteins and deubiquitinates core clock component PER1 but does not affect its overall stability. Regulates the nucleocytoplasmic shuttling and nuclear retention of PER1 and its repressive role on the clock transcription factors CLOCK and BMAL1. Plays a role in the regulation of myogenic differentiation of embryonic muscle cells. Circadian clock output effector that regulates Ca(2+) absorption in the small intestine. Probably functions by regulating protein levels of the membrane scaffold protein NHERF4 in a rhythmic manner, and is therefore likely to control Ca(2+) membrane permeability mediated by the Ca(2+) channel TRPV6 in the intestine. The sequence is that of Ubiquitin carboxyl-terminal hydrolase 2 (Usp2) from Rattus norvegicus (Rat).